A 669-amino-acid chain; its full sequence is Trifunctional UDP-glucose 4,6-dehydratase/UDP-4-keto-6-deoxy-D-glucose 3,5-epimerase/UDP-4-keto-L-rhamnose-reductase RHM1 (669 aa).

Residue 13–19 (GAAGFIA) coordinates NAD(+). Residue T132 participates in substrate binding. The active-site Proton donor is D133. Residues E134 and Y159 each act as proton acceptor in the active site. NADP(+) is bound at residue 391 to 397 (GKTGWIG).

In the N-terminal section; belongs to the NAD(P)-dependent epimerase/dehydratase family. dTDP-glucose dehydratase subfamily. It in the C-terminal section; belongs to the dTDP-4-dehydrorhamnose reductase family. The cofactor is NAD(+). NADP(+) serves as cofactor. In terms of tissue distribution, expressed in roots, stems, leaves, seedlings, inflorescence tips, and siliques. Detected in the adaxial side of cotyledons, in the emerging leaves and in trichomes. Also detected in the root tip, more precisely in the epidermal cells in the meristematic and elongation zone.

The protein localises to the cytoplasm. It localises to the cytosol. It catalyses the reaction UDP-alpha-D-glucose = UDP-4-dehydro-6-deoxy-alpha-D-glucose + H2O. It functions in the pathway carbohydrate biosynthesis. In terms of biological role, trifunctional enzyme involved in UDP-beta-L-rhamnose biosynthesis, a precursor of the primary cell wall components rhamnogalacturonan I (RG-I) and rhamnogalacturonan II (RG-II). Plays a major role in supplying UDP-rhamnose for flavonol biosynthesis. Catalyzes the dehydration of UDP-glucose to form UDP-4-dehydro-6-deoxy-D-glucose followed by the epimerization of the C3' and C5' positions of UDP-4-dehydro-6-deoxy-D-glucose to form UDP-4-keto-beta-L-rhamnose and the reduction of UDP-4-keto-beta-L-rhamnose to yield UDP-beta-L-rhamnose. In Arabidopsis thaliana (Mouse-ear cress), this protein is Trifunctional UDP-glucose 4,6-dehydratase/UDP-4-keto-6-deoxy-D-glucose 3,5-epimerase/UDP-4-keto-L-rhamnose-reductase RHM1.